The sequence spans 184 residues: Adenylate kinase 2 (184 aa).

Position 10–15 (10–15) interacts with ATP; it reads GSGKST. An NMP region spans residues 30-59; the sequence is STGEILREAISHLSELGRHAQPYMIKGELV. Residues T31, R36, 57-59, 85-88, and Q92 each bind AMP; these read ELV and GYPR. The tract at residues 126–132 is LID; the sequence is GRSLPDD. R127 is an ATP binding site. Residue R140 coordinates AMP. Q168 provides a ligand contact to ATP.

It belongs to the adenylate kinase family. As to quaternary structure, monomer.

The protein localises to the cytoplasm. It catalyses the reaction AMP + ATP = 2 ADP. Its pathway is purine metabolism; AMP biosynthesis via salvage pathway; AMP from ADP: step 1/1. Its function is as follows. Catalyzes the reversible transfer of the terminal phosphate group between ATP and AMP. Plays an important role in cellular energy homeostasis and in adenine nucleotide metabolism. This chain is Adenylate kinase 2, found in Nostoc sp. (strain PCC 7120 / SAG 25.82 / UTEX 2576).